The primary structure comprises 136 residues: Classical arabinogalactan protein 11 (136 aa).

A signal peptide spans 1 to 20 (MARLFVVVALLALAVGTVFA). 3 stretches are compositionally biased toward low complexity: residues 24 to 56 (PSAA…ASSP), 68 to 81 (SAAS…APTV), and 89 to 107 (PEAD…PAAA). Residues 24–115 (PSAAPTASPT…AAESPKSGAT (92 aa)) are disordered. Ser112 carries the GPI-anchor amidated serine lipid modification. The propeptide at 113–136 (GATTNVKLSIAGTVAAAGFFIFSL) is removed in mature form.

The protein belongs to the classical AGP family. In terms of processing, O-glycosylated on the hydroxyproline residues.

Its subcellular location is the cell membrane. Functionally, proteoglycan that seems to be implicated in diverse developmental roles such as differentiation, cell-cell recognition, embryogenesis and programmed cell death. The chain is Classical arabinogalactan protein 11 (AGP11) from Arabidopsis thaliana (Mouse-ear cress).